A 201-amino-acid polypeptide reads, in one-letter code: Adenylyl-sulfate kinase (201 aa).

35–42 (GLSGSGKS) serves as a coordination point for ATP. Ser109 serves as the catalytic Phosphoserine intermediate.

Belongs to the APS kinase family.

The catalysed reaction is adenosine 5'-phosphosulfate + ATP = 3'-phosphoadenylyl sulfate + ADP + H(+). Its pathway is sulfur metabolism; hydrogen sulfide biosynthesis; sulfite from sulfate: step 2/3. Functionally, catalyzes the synthesis of activated sulfate. The polypeptide is Adenylyl-sulfate kinase (Bacteroides thetaiotaomicron (strain ATCC 29148 / DSM 2079 / JCM 5827 / CCUG 10774 / NCTC 10582 / VPI-5482 / E50)).